Here is a 93-residue protein sequence, read N- to C-terminus: Pyrimidine/purine nucleoside phosphorylase (93 aa).

It belongs to the nucleoside phosphorylase PpnP family.

It catalyses the reaction a purine D-ribonucleoside + phosphate = a purine nucleobase + alpha-D-ribose 1-phosphate. It carries out the reaction adenosine + phosphate = alpha-D-ribose 1-phosphate + adenine. The catalysed reaction is cytidine + phosphate = cytosine + alpha-D-ribose 1-phosphate. The enzyme catalyses guanosine + phosphate = alpha-D-ribose 1-phosphate + guanine. It catalyses the reaction inosine + phosphate = alpha-D-ribose 1-phosphate + hypoxanthine. It carries out the reaction thymidine + phosphate = 2-deoxy-alpha-D-ribose 1-phosphate + thymine. The catalysed reaction is uridine + phosphate = alpha-D-ribose 1-phosphate + uracil. The enzyme catalyses xanthosine + phosphate = alpha-D-ribose 1-phosphate + xanthine. Functionally, catalyzes the phosphorolysis of diverse nucleosides, yielding D-ribose 1-phosphate and the respective free bases. Can use uridine, adenosine, guanosine, cytidine, thymidine, inosine and xanthosine as substrates. Also catalyzes the reverse reactions. The protein is Pyrimidine/purine nucleoside phosphorylase of Photobacterium profundum (strain SS9).